Consider the following 163-residue polypeptide: Beta-lactoglobulin-2 (163 aa).

Intrachain disulfides connect Cys-66/Cys-161 and Cys-106/Cys-120.

The protein belongs to the calycin superfamily. Lipocalin family. In terms of assembly, monomer.

It is found in the secreted. In terms of biological role, lactoglobulin is the primary component of whey, it binds retinol and is probably involved in the transport of that molecule. This is Beta-lactoglobulin-2 (LGB2) from Felis catus (Cat).